The sequence spans 268 residues: Indole-3-glycerol phosphate synthase (268 aa).

Belongs to the TrpC family.

It catalyses the reaction 1-(2-carboxyphenylamino)-1-deoxy-D-ribulose 5-phosphate + H(+) = (1S,2R)-1-C-(indol-3-yl)glycerol 3-phosphate + CO2 + H2O. It participates in amino-acid biosynthesis; L-tryptophan biosynthesis; L-tryptophan from chorismate: step 4/5. The protein is Indole-3-glycerol phosphate synthase of Parafrankia sp. (strain EAN1pec).